We begin with the raw amino-acid sequence, 182 residues long: RSCEICHNLGKDCEGYSTECDSPEDQCGMVLLEVSPAPISFRTVHRNCFSSSLCKLEQFDVNLGHDAYFRGRIHCCEEEKCEVNSFPGLPFSQLNGYSCPGVLGLFSEDSSEHEALCRGTETKCIEIVGYRKERFPGDIAYNIKGCTSSCPVLRLSNRTHEANRNDLIKVACTDASKTTPSE.

Disulfide bonds link Cys-3/Cys-27, Cys-6/Cys-13, Cys-20/Cys-48, Cys-54/Cys-75, Cys-76/Cys-81, Cys-99/Cys-124, Cys-117/Cys-146, and Cys-150/Cys-172. Asn-157 is a glycosylation site (N-linked (GlcNAc...) asparagine).

The protein belongs to the CNF-like-inhibitor family. Heterodimer of subunit A and subunit B.

The protein resides in the secreted. Phospholipase A2 (PA2) inhibitor. Inhibits the enzymatic activity of PA2 of Deinagkistrodon acutus. Also shows a wide anti-hemorrhage activities to D.acutus, Naja atra and Agkistrodon halys venom. The native protein is more potent than the recombinant one. The chain is Phospholipase A2 inhibitor gamma subunit A2 from Trimerodytes annularis (Red-bellied annulate keelback).